The following is a 117-amino-acid chain: Large-conductance mechanosensitive channel (117 aa).

The next 3 helical transmembrane spans lie at 7–27 (EFAL…GAAF), 30–50 (IVTA…FGTV), and 64–84 (GMFV…FIFV).

This sequence belongs to the MscL family. As to quaternary structure, homopentamer.

The protein localises to the cell membrane. Its function is as follows. Channel that opens in response to stretch forces in the membrane lipid bilayer. May participate in the regulation of osmotic pressure changes within the cell. This is Large-conductance mechanosensitive channel from Staphylococcus saprophyticus subsp. saprophyticus (strain ATCC 15305 / DSM 20229 / NCIMB 8711 / NCTC 7292 / S-41).